The following is a 417-amino-acid chain: 4-hydroxy-3-methylbut-2-enyl diphosphate reductase (417 aa).

Cysteine 56 contacts [4Fe-4S] cluster. Histidine 86 lines the (2E)-4-hydroxy-3-methylbut-2-enyl diphosphate pocket. Dimethylallyl diphosphate is bound at residue histidine 86. Histidine 86 is a binding site for isopentenyl diphosphate. Residue cysteine 151 participates in [4Fe-4S] cluster binding. (2E)-4-hydroxy-3-methylbut-2-enyl diphosphate is bound at residue histidine 179. Dimethylallyl diphosphate is bound at residue histidine 179. An isopentenyl diphosphate-binding site is contributed by histidine 179. The active-site Proton donor is the glutamate 181. Residue threonine 244 coordinates (2E)-4-hydroxy-3-methylbut-2-enyl diphosphate. Cysteine 282 contacts [4Fe-4S] cluster. Residues serine 311, serine 312, asparagine 313, and serine 374 each coordinate (2E)-4-hydroxy-3-methylbut-2-enyl diphosphate. Dimethylallyl diphosphate is bound by residues serine 311, serine 312, asparagine 313, and serine 374. 4 residues coordinate isopentenyl diphosphate: serine 311, serine 312, asparagine 313, and serine 374.

The protein belongs to the IspH family. The cofactor is [4Fe-4S] cluster.

It carries out the reaction isopentenyl diphosphate + 2 oxidized [2Fe-2S]-[ferredoxin] + H2O = (2E)-4-hydroxy-3-methylbut-2-enyl diphosphate + 2 reduced [2Fe-2S]-[ferredoxin] + 2 H(+). The catalysed reaction is dimethylallyl diphosphate + 2 oxidized [2Fe-2S]-[ferredoxin] + H2O = (2E)-4-hydroxy-3-methylbut-2-enyl diphosphate + 2 reduced [2Fe-2S]-[ferredoxin] + 2 H(+). Its pathway is isoprenoid biosynthesis; dimethylallyl diphosphate biosynthesis; dimethylallyl diphosphate from (2E)-4-hydroxy-3-methylbutenyl diphosphate: step 1/1. It participates in isoprenoid biosynthesis; isopentenyl diphosphate biosynthesis via DXP pathway; isopentenyl diphosphate from 1-deoxy-D-xylulose 5-phosphate: step 6/6. Its function is as follows. Catalyzes the conversion of 1-hydroxy-2-methyl-2-(E)-butenyl 4-diphosphate (HMBPP) into a mixture of isopentenyl diphosphate (IPP) and dimethylallyl diphosphate (DMAPP). Acts in the terminal step of the DOXP/MEP pathway for isoprenoid precursor biosynthesis. The chain is 4-hydroxy-3-methylbut-2-enyl diphosphate reductase from Gloeobacter violaceus (strain ATCC 29082 / PCC 7421).